Here is a 514-residue protein sequence, read N- to C-terminus: Serine--tRNA ligase, cytoplasmic (514 aa).

Methionine 1 bears the N-acetylmethionine mark. Residues 9–61 (RVDKGGDPALIRETQEKRFKDPGLVDQLVKADSEWRRCRFRADNLNKLKNLCS) form an interaction with tRNA region. Serine 241 carries the phosphoserine modification. Positions 271 and 302 each coordinate L-serine. ATP is bound by residues 302–304 (RQE) and 318–321 (VHQF). N6-acetyllysine is present on lysine 323. Glutamate 325 is an L-serine binding site. An ATP-binding site is contributed by 391-394 (ELVS). Position 427 (asparagine 427) interacts with L-serine. The segment at 472–514 (KPAPIDQEPSKKQKKQHEGSKKKAAARDVTLENRLQNMEVTDA) is disordered. Basic and acidic residues predominate over residues 479 to 502 (EPSKKQKKQHEGSKKKAAARDVTL). Positions 482–494 (KKQKKQHEGSKKK) match the Nuclear localization signal motif. Residues 504–514 (NRLQNMEVTDA) are compositionally biased toward polar residues.

It belongs to the class-II aminoacyl-tRNA synthetase family. Type-1 seryl-tRNA synthetase subfamily. In terms of assembly, homodimer. The tRNA molecule may bind across the dimer. Interacts with SIRT2. Interacts with METTL6; interaction is required for the tRNA N(3)-methylcytidine methyltransferase activity of METTL6.

It is found in the cytoplasm. It localises to the nucleus. It carries out the reaction tRNA(Ser) + L-serine + ATP = L-seryl-tRNA(Ser) + AMP + diphosphate + H(+). The catalysed reaction is tRNA(Sec) + L-serine + ATP = L-seryl-tRNA(Sec) + AMP + diphosphate + H(+). Its pathway is aminoacyl-tRNA biosynthesis; selenocysteinyl-tRNA(Sec) biosynthesis; L-seryl-tRNA(Sec) from L-serine and tRNA(Sec): step 1/1. Catalyzes the attachment of serine to tRNA(Ser) in a two-step reaction: serine is first activated by ATP to form Ser-AMP and then transferred to the acceptor end of tRNA(Ser). Is probably also able to aminoacylate tRNA(Sec) with serine, to form the misacylated tRNA L-seryl-tRNA(Sec), which will be further converted into selenocysteinyl-tRNA(Sec). In the nucleus, binds to the VEGFA core promoter and prevents MYC binding and transcriptional activation by MYC. Recruits SIRT2 to the VEGFA promoter, promoting deacetylation of histone H4 at 'Lys-16' (H4K16). Thereby, inhibits the production of VEGFA and sprouting angiogenesis mediated by VEGFA. The sequence is that of Serine--tRNA ligase, cytoplasmic (SARS1) from Oryctolagus cuniculus (Rabbit).